The sequence spans 207 residues: Ras-related protein Rab-8B (207 aa).

Residues Ser17, Gly18, Val19, Gly20, Lys21, Thr22, Cys23, Thr35, Ser39, and Thr40 each contribute to the GTP site. A Mg(2+)-binding site is contributed by Thr22. 2 consecutive short sequence motifs (switch) follow at residues 31–45 (DAFNTTFISTIGIDF) and 63–80 (DTAGQERFRTITTAYYRG). Mg(2+)-binding residues include Thr40 and Asp63. Gly66 is a GTP binding site. At Thr72 the chain carries Phosphothreonine; by LRRK2. GTP contacts are provided by Asn121, Lys122, Asp124, Ala152, and Lys153. Phosphoserine is present on residues Ser180 and Ser183. Cys204 is modified (cysteine methyl ester). Cys204 carries S-geranylgeranyl cysteine lipidation. Positions 205-207 (SLL) are cleaved as a propeptide — removed in mature form.

This sequence belongs to the small GTPase superfamily. Rab family. Associated with actin, delta-catenin and alpha and beta tubulins. Interacts with OTOF. Interacts with PEX5R. Interacts with RAB3IP. Interacts with VIM. Interacts with CDH1. Interacts with MICALL2. Interacts with GDI1, GDI2, CHML and CHM; phosphorylation at Thr-72 disrupts these interactions. Interacts with MICAL1. Mg(2+) serves as cofactor. Phosphorylation of Thr-72 in the switch II region by LRRK2 prevents the association of RAB regulatory proteins, including CHM, CHML and RAB GDP dissociation inhibitors GDI1 and GDI2.

The protein localises to the cell membrane. The protein resides in the cytoplasmic vesicle. Its subcellular location is the phagosome membrane. It is found in the endosome membrane. The enzyme catalyses GTP + H2O = GDP + phosphate + H(+). Its activity is regulated as follows. Regulated by guanine nucleotide exchange factors (GEFs) including RAB3IP/RABIN8 which promotes the exchange of bound GDP for free GTP. Regulated by GTPase activating proteins (GAPs) which increase the GTP hydrolysis activity. Inhibited by GDP dissociation inhibitors (GDIs). Its function is as follows. The small GTPases Rab are key regulators of intracellular membrane trafficking, from the formation of transport vesicles to their fusion with membranes. Rabs cycle between an inactive GDP-bound form and an active GTP-bound form that is able to recruit to membranes different sets of downstream effectors directly responsible for vesicle formation, movement, tethering and fusion. RAB8B may be involved in polarized vesicular trafficking and neurotransmitter release. May participate in cell junction dynamics in Sertoli cells. May also participate in the export of a subset of neosynthesized proteins through a Rab8-Rab10-Rab11-dependent endososomal export route. In Mus musculus (Mouse), this protein is Ras-related protein Rab-8B.